The sequence spans 213 residues: Orotate phosphoribosyltransferase (213 aa).

K26 serves as a coordination point for 5-phospho-alpha-D-ribose 1-diphosphate. 34 to 35 (FF) serves as a coordination point for orotate. Residues 72-73 (YK), R99, K100, K103, H105, and 124-132 (DDVITAGTA) each bind 5-phospho-alpha-D-ribose 1-diphosphate. Orotate-binding residues include T128 and R156.

The protein belongs to the purine/pyrimidine phosphoribosyltransferase family. PyrE subfamily. Homodimer. It depends on Mg(2+) as a cofactor.

It carries out the reaction orotidine 5'-phosphate + diphosphate = orotate + 5-phospho-alpha-D-ribose 1-diphosphate. It participates in pyrimidine metabolism; UMP biosynthesis via de novo pathway; UMP from orotate: step 1/2. Catalyzes the transfer of a ribosyl phosphate group from 5-phosphoribose 1-diphosphate to orotate, leading to the formation of orotidine monophosphate (OMP). In Vibrio vulnificus (strain YJ016), this protein is Orotate phosphoribosyltransferase.